Here is a 902-residue protein sequence, read N- to C-terminus: Protein NrfI (902 aa).

Transmembrane regions (helical) follow at residues tyrosine 9–isoleucine 29, phenylalanine 75–glycine 95, valine 300–threonine 320, leucine 335–serine 355, leucine 602–alanine 622, aspartate 659–phenylalanine 679, serine 731–leucine 751, valine 772–alanine 792, tyrosine 832–valine 852, and leucine 868–alanine 888.

In the C-terminal section; belongs to the CcmF/CycK/Ccl1/NrfE/CcsA family.

The protein localises to the cell membrane. Functionally, may play a role in cytochrome c biogenesis and may be required for maturation of the NrfA protein. The polypeptide is Protein NrfI (nrfI) (Wolinella succinogenes (strain ATCC 29543 / DSM 1740 / CCUG 13145 / JCM 31913 / LMG 7466 / NCTC 11488 / FDC 602W) (Vibrio succinogenes)).